A 1755-amino-acid chain; its full sequence is Transposon Ty1-GR1 Gag-Pol polyprotein (1755 aa).

Residues 1-16 (MESQQLSQHSHISHGS) are compositionally biased toward low complexity. Disordered regions lie at residues 1–93 (MESQ…MMTQ), 126–173 (PQSQ…RPPP), and 352–421 (GSRN…SKST). Polar residues-rich tracts occupy residues 48–60 (TKAN…TPAS), 71–93 (SPQT…MMTQ), and 127–152 (QSQF…GNTF). Residues 153-165 (TDSSSADSDMTST) show a composition bias toward low complexity. An RNA-binding region spans residues 299–401 (NNGIHINNKV…NSKSKTARAH (103 aa)). Low complexity predominate over residues 402 to 418 (NVSTSNNSPSTDNDSIS). The residue at position 416 (Ser416) is a Phosphoserine. Residue Asp461 is the For protease activity; shared with dimeric partner of the active site. An integrase-type zinc finger-like region spans residues 583–640 (NVHTSESTRKYPYPFIHRMLAHANAQTIRYSLKNNTITYFNESDVDWSSAIDYQCPDC). Positions 660–835 (NSYEPFQYLH…AGLDISTLLP (176 aa)) constitute an Integrase catalytic domain. Mg(2+) contacts are provided by Asp671 and Asp736. Disordered regions lie at residues 956–1087 (SKAV…ETEK), 1092–1111 (RSPS…NIVP), and 1130–1187 (DLPL…DNET). Low complexity predominate over residues 960-969 (SPTDSTPPST). The segment covering 1005 to 1015 (STPQISNIEST) has biased composition (polar residues). Over residues 1038–1053 (ESSHASKSKDFRHSDS) the composition is skewed to basic and acidic residues. 2 stretches are compositionally biased toward polar residues: residues 1054-1082 (YSEN…QISD) and 1101-1111 (PENNSSHNIVP). The short motif at 1178 to 1212 (KKRSLEDNETEIKVSRDTWNTKNMRSLEPPRSKKR) is the Bipartite nuclear localization signal element. A Reverse transcriptase Ty1/copia-type domain is found at 1338-1476 (NNYYITQLDI…DILGLEIKYQ (139 aa)). Residues Asp1346, Asp1427, Asp1428, Asp1610, Glu1652, and Asp1685 each coordinate Mg(2+). The RNase H Ty1/copia-type domain occupies 1610 to 1752 (DASYGNQPYY…IKTFKLLTNK (143 aa)).

The capsid protein forms a homotrimer, from which the VLPs are assembled. The protease is a homodimer, whose active site consists of two apposed aspartic acid residues. Initially, virus-like particles (VLPs) are composed of the structural unprocessed proteins Gag and Gag-Pol, and also contain the host initiator methionine tRNA (tRNA(i)-Met) which serves as a primer for minus-strand DNA synthesis, and a dimer of genomic Ty RNA. Processing of the polyproteins occurs within the particle and proceeds by an ordered pathway, called maturation. First, the protease (PR) is released by autocatalytic cleavage of the Gag-Pol polyprotein yielding capsid protein p45 and a Pol-p154 precursor protein. This cleavage is a prerequisite for subsequent processing of Pol-p154 at the remaining sites to release the mature structural and catalytic proteins. Maturation takes place prior to the RT reaction and is required to produce transposition-competent VLPs.

The protein localises to the cytoplasm. It is found in the nucleus. It catalyses the reaction DNA(n) + a 2'-deoxyribonucleoside 5'-triphosphate = DNA(n+1) + diphosphate. The enzyme catalyses Endonucleolytic cleavage to 5'-phosphomonoester.. Functionally, capsid protein (CA) is the structural component of the virus-like particle (VLP), forming the shell that encapsulates the retrotransposons dimeric RNA genome. The particles are assembled from trimer-clustered units and there are holes in the capsid shells that allow for the diffusion of macromolecules. CA also has nucleocapsid-like chaperone activity, promoting primer tRNA(i)-Met annealing to the multipartite primer-binding site (PBS), dimerization of Ty1 RNA and initiation of reverse transcription. Its function is as follows. The aspartyl protease (PR) mediates the proteolytic cleavages of the Gag and Gag-Pol polyproteins after assembly of the VLP. Reverse transcriptase/ribonuclease H (RT) is a multifunctional enzyme that catalyzes the conversion of the retro-elements RNA genome into dsDNA within the VLP. The enzyme displays a DNA polymerase activity that can copy either DNA or RNA templates, and a ribonuclease H (RNase H) activity that cleaves the RNA strand of RNA-DNA heteroduplexes during plus-strand synthesis and hydrolyzes RNA primers. The conversion leads to a linear dsDNA copy of the retrotransposon that includes long terminal repeats (LTRs) at both ends. In terms of biological role, integrase (IN) targets the VLP to the nucleus, where a subparticle preintegration complex (PIC) containing at least integrase and the newly synthesized dsDNA copy of the retrotransposon must transit the nuclear membrane. Once in the nucleus, integrase performs the integration of the dsDNA into the host genome. This chain is Transposon Ty1-GR1 Gag-Pol polyprotein (TY1B-GR1), found in Saccharomyces cerevisiae (strain ATCC 204508 / S288c) (Baker's yeast).